We begin with the raw amino-acid sequence, 562 residues long: Arginine--tRNA ligase (562 aa).

A 'HIGH' region motif is present at residues 136-146 (ANPTGPMHMGN).

It belongs to the class-I aminoacyl-tRNA synthetase family. In terms of assembly, monomer.

The protein resides in the cytoplasm. It catalyses the reaction tRNA(Arg) + L-arginine + ATP = L-arginyl-tRNA(Arg) + AMP + diphosphate. The sequence is that of Arginine--tRNA ligase (argS) from Caldanaerobacter subterraneus subsp. tengcongensis (strain DSM 15242 / JCM 11007 / NBRC 100824 / MB4) (Thermoanaerobacter tengcongensis).